The chain runs to 501 residues: LIM domain-containing protein HDR3 (501 aa).

The segment at 33 to 67 (GEANRRRPRVTAGEETTLWEEPVRPKKEEPPRHNN) is disordered. Basic and acidic residues predominate over residues 53 to 67 (EPVRPKKEEPPRHNN). UIM domains lie at 65-84 (HNNE…DAKN) and 94-113 (ENDE…NPYQ). Positions 131–191 (RVCGGCKHEI…KLCYKELHHP (61 aa)) constitute an LIM zinc-binding domain. Positions 429 to 448 (YASSSSSSCRPPPSKKGGIS) are disordered.

As to quaternary structure, interacts (via N-terminus) with GW6A (via C-terminus).

Ubiquitin receptor that functions as a positive regulator of grain size and weight. Functions in the same genetic pathway as GW6A to regulate grain size. Modulates grain size in a similar manner to GW6A, by altering cell proliferation in spikelet hulls. Interacts with and enhances the ubiquitination of GW6A. This stabilizes GW6A, delays protein degradation by the 26S proteasome and enhances GW6A histone acetyltransferase activity. The protein is LIM domain-containing protein HDR3 of Oryza sativa subsp. japonica (Rice).